The following is a 314-amino-acid chain: Methionyl-tRNA formyltransferase (314 aa).

A (6S)-5,6,7,8-tetrahydrofolate-binding site is contributed by 112–115 (SLLP).

Belongs to the Fmt family.

It catalyses the reaction L-methionyl-tRNA(fMet) + (6R)-10-formyltetrahydrofolate = N-formyl-L-methionyl-tRNA(fMet) + (6S)-5,6,7,8-tetrahydrofolate + H(+). In terms of biological role, attaches a formyl group to the free amino group of methionyl-tRNA(fMet). The formyl group appears to play a dual role in the initiator identity of N-formylmethionyl-tRNA by promoting its recognition by IF2 and preventing the misappropriation of this tRNA by the elongation apparatus. The chain is Methionyl-tRNA formyltransferase from Aeromonas salmonicida (strain A449).